Consider the following 595-residue polypeptide: Glutamyl-tRNA(Gln) amidotransferase subunit B, mitochondrial (595 aa).

Residues 1–114 (MPRLWYSRYL…RAPTSTVAEP (114 aa)) constitute a mitochondrion transit peptide. Positions 59–78 (KEEAKRSKSQSRNGRGKKQV) are disordered.

This sequence belongs to the GatB/GatE family. GatB subfamily. As to quaternary structure, subunit of the heterotrimeric GatCAB amidotransferase (AdT) complex, composed of A, B and C subunits.

It is found in the mitochondrion. It catalyses the reaction L-glutamyl-tRNA(Gln) + L-glutamine + ATP + H2O = L-glutaminyl-tRNA(Gln) + L-glutamate + ADP + phosphate + H(+). Allows the formation of correctly charged Gln-tRNA(Gln) through the transamidation of misacylated Glu-tRNA(Gln) in the mitochondria. The reaction takes place in the presence of glutamine and ATP through an activated gamma-phospho-Glu-tRNA(Gln). The polypeptide is Glutamyl-tRNA(Gln) amidotransferase subunit B, mitochondrial (Talaromyces stipitatus (strain ATCC 10500 / CBS 375.48 / QM 6759 / NRRL 1006) (Penicillium stipitatum)).